Here is a 204-residue protein sequence, read N- to C-terminus: MESLFSTMIVLLLVSFSCLISTEALTSNYGNITVKWDLLNWTPDGYVAVVTAYNYQKQRSIPGWKMSWRGTKKEVIWNMLGAKTTGQGGCSMFKGNIPQSCVRKPTVVDLLPGTPFNQQIANCCKSGVLKPGSESAFQLSVGSAGNSVKTARMPANFMFTAPKQQYICGPSKNVRPTRFTTADKRRITAALMTWNITCVFHKAT.

A signal peptide spans 1–24; that stretch reads MESLFSTMIVLLLVSFSCLISTEA. N-linked (GlcNAc...) asparagine glycosylation is found at asparagine 31 and asparagine 195.

This sequence belongs to the COBRA family. As to expression, expressed in roots, stems, leaves, flowers and siliques.

The protein is COBRA-like protein 5 (COBL5) of Arabidopsis thaliana (Mouse-ear cress).